Consider the following 360-residue polypeptide: Phospho-N-acetylmuramoyl-pentapeptide-transferase (360 aa).

Helical transmembrane passes span 20-40 (YITFRAGGAFFTALLFGFFFG), 71-91 (TPTMGGLLILAALTIGTLLWA), 93-113 (LDNGYVWIVLLVTLGFAAIGF), 134-154 (LLIGLCIAAAAGAAAAWLHPA), 168-188 (ALINLGLLYVPFTVLVILGAA), 199-219 (GLAIMPVMIAAASFSVIAYMV), 239-259 (LAVFVAALIGGGLGFLWYNAP), 263-283 (VFMGDTGSLALGGALGAIAVV), 288-308 (IVLAIVGGLFVVEALSVIIQV), and 337-357 (QIVIRFWIIALILALIGLATL).

It belongs to the glycosyltransferase 4 family. MraY subfamily. Mg(2+) serves as cofactor.

It is found in the cell inner membrane. It catalyses the reaction UDP-N-acetyl-alpha-D-muramoyl-L-alanyl-gamma-D-glutamyl-meso-2,6-diaminopimeloyl-D-alanyl-D-alanine + di-trans,octa-cis-undecaprenyl phosphate = di-trans,octa-cis-undecaprenyl diphospho-N-acetyl-alpha-D-muramoyl-L-alanyl-D-glutamyl-meso-2,6-diaminopimeloyl-D-alanyl-D-alanine + UMP. The protein operates within cell wall biogenesis; peptidoglycan biosynthesis. In terms of biological role, catalyzes the initial step of the lipid cycle reactions in the biosynthesis of the cell wall peptidoglycan: transfers peptidoglycan precursor phospho-MurNAc-pentapeptide from UDP-MurNAc-pentapeptide onto the lipid carrier undecaprenyl phosphate, yielding undecaprenyl-pyrophosphoryl-MurNAc-pentapeptide, known as lipid I. This is Phospho-N-acetylmuramoyl-pentapeptide-transferase from Paracoccus denitrificans (strain Pd 1222).